Consider the following 206-residue polypeptide: High frequency lysogenization protein HflD homolog (206 aa).

This sequence belongs to the HflD family.

The protein resides in the cytoplasm. It localises to the cell inner membrane. This chain is High frequency lysogenization protein HflD homolog, found in Pseudomonas savastanoi pv. phaseolicola (strain 1448A / Race 6) (Pseudomonas syringae pv. phaseolicola (strain 1448A / Race 6)).